The sequence spans 97 residues: UPF0235 protein Ppha_2415 (97 aa).

The protein belongs to the UPF0235 family.

This Pelodictyon phaeoclathratiforme (strain DSM 5477 / BU-1) protein is UPF0235 protein Ppha_2415.